Consider the following 304-residue polypeptide: UDP-N-acetylenolpyruvoylglucosamine reductase (304 aa).

Positions 33 to 198 constitute an FAD-binding PCMH-type domain; the sequence is IGGPADLLVM…LEVVLALQEG (166 aa). Residue R177 is part of the active site. S227 (proton donor) is an active-site residue. E297 is an active-site residue.

Belongs to the MurB family. Requires FAD as cofactor.

The protein localises to the cytoplasm. The enzyme catalyses UDP-N-acetyl-alpha-D-muramate + NADP(+) = UDP-N-acetyl-3-O-(1-carboxyvinyl)-alpha-D-glucosamine + NADPH + H(+). Its pathway is cell wall biogenesis; peptidoglycan biosynthesis. Functionally, cell wall formation. The sequence is that of UDP-N-acetylenolpyruvoylglucosamine reductase from Alkaliphilus metalliredigens (strain QYMF).